We begin with the raw amino-acid sequence, 492 residues long: Glutamyl-tRNA(Gln) amidotransferase subunit A (492 aa).

Residues lysine 78 and serine 158 each act as charge relay system in the active site. Serine 182 serves as the catalytic Acyl-ester intermediate.

This sequence belongs to the amidase family. GatA subfamily. In terms of assembly, heterotrimer of A, B and C subunits.

The enzyme catalyses L-glutamyl-tRNA(Gln) + L-glutamine + ATP + H2O = L-glutaminyl-tRNA(Gln) + L-glutamate + ADP + phosphate + H(+). In terms of biological role, allows the formation of correctly charged Gln-tRNA(Gln) through the transamidation of misacylated Glu-tRNA(Gln) in organisms which lack glutaminyl-tRNA synthetase. The reaction takes place in the presence of glutamine and ATP through an activated gamma-phospho-Glu-tRNA(Gln). The chain is Glutamyl-tRNA(Gln) amidotransferase subunit A from Zymomonas mobilis subsp. mobilis (strain ATCC 31821 / ZM4 / CP4).